The following is a 159-amino-acid chain: Mitotic-spindle organizing protein 2 (159 aa).

Residues 87–159 (LASDPQDSVP…SGKSNSRSSP (73 aa)) are disordered. Over residues 91 to 105 (PQDSVPISLSTSTSE) the composition is skewed to polar residues. At Arg111 the chain carries Omega-N-methylarginine. Ser153 bears the Phosphoserine mark.

The protein belongs to the MOZART2 family. In terms of assembly, associates with the gamma-tubulin ring complex (gTuRC) consisting of TUBGCP2, TUBGCP3, TUBGCP4, TUBGCP5 and TUBGCP6 and gamma-tubulin TUBG1 or TUBG2; within the complex, interacts with TUBGCP2; the interaction plays a role in gTuRC activation.

The protein resides in the cytoplasm. It is found in the cytoskeleton. The protein localises to the microtubule organizing center. Its subcellular location is the centrosome. It localises to the spindle. Its function is as follows. Required for the recruitment and the assembly of the gamma-tubulin ring complex (gTuRC) at the centrosome. The gTuRC regulates the minus-end nucleation of alpha-beta tubulin heterodimers that grow into microtubule protafilaments, a critical step in centrosome duplication and spindle formation. The sequence is that of Mitotic-spindle organizing protein 2 (Mzt2) from Mus musculus (Mouse).